We begin with the raw amino-acid sequence, 201 residues long: Small ribosomal subunit protein uS2 (201 aa).

This sequence belongs to the universal ribosomal protein uS2 family.

The sequence is that of Small ribosomal subunit protein uS2 from Nanoarchaeum equitans (strain Kin4-M).